The chain runs to 134 residues: MSKSLTIIWQYLRAFVLIYACLYAGIFIAGLLPITIPGSIIGMLILFVLLALQIMPPQWVNPGCNILIRYMALLFVPIGVGVMQYWDLLRAQLGPVVISCAISTLVVFVVVSWSSHLVHGERKVIGQKEKKNDA.

4 helical membrane-spanning segments follow: residues 5 to 25 (LTII…LYAG), 26 to 46 (IFIA…MLIL), 66 to 86 (ILIR…MQYW), and 93 to 113 (LGPV…VVSW).

Belongs to the UPF0299 family.

The protein localises to the cell inner membrane. This chain is UPF0299 membrane protein KPK_1586, found in Klebsiella pneumoniae (strain 342).